The chain runs to 205 residues: Cerebellin-3 (205 aa).

Positions 1–32 are cleaved as a signal peptide; the sequence is MLGTKRHWPPGPSLSLELPLALTLLALRAGWA. Residues 67–205 enclose the C1q domain; it reads APPGRVAFAA…SFSGFLIFPL (139 aa). Residue N90 is glycosylated (N-linked (GlcNAc...) asparagine).

As to quaternary structure, heterohexamer; disulfide-linked heterotrimers. Interacts with CBLN1. May also form oligomers with CBLN2 and CBLN4.

The protein resides in the endoplasmic reticulum. Its subcellular location is the golgi apparatus. It localises to the cis-Golgi network. It is found in the secreted. The protein localises to the synapse. In terms of biological role, may be involved in synaptic functions in the CNS. In Bos taurus (Bovine), this protein is Cerebellin-3 (CBLN3).